We begin with the raw amino-acid sequence, 272 residues long: L-aminoadipate-semialdehyde dehydrogenase-phosphopantetheinyl transferase (272 aa).

This sequence belongs to the P-Pant transferase superfamily. AcpS family.

It carries out the reaction apo-[ACP] + CoA = holo-[ACP] + adenosine 3',5'-bisphosphate + H(+). Functionally, catalyzes the transfer of a 4'-phosphopantetheine moiety from coenzyme A to a serine residue of acceptor proteins, such as alpha-aminoadipate reductase. Necessary for alpha-aminoadipate reductase activity. The protein is L-aminoadipate-semialdehyde dehydrogenase-phosphopantetheinyl transferase of Saccharomyces cerevisiae (strain ATCC 204508 / S288c) (Baker's yeast).